Here is a 3016-residue protein sequence, read N- to C-terminus: MSTLPKPQRKTKRNTNRRPMDVKFPGGGQIVGGVYLLPRRGPRLGVRATRKTSERSQPRGRRQPIPKARQSQGRHWAQPGYPWPLYGNEGCGWAGWLLSPRGSRPNWGPNDPRRRSRNLGKVIDTLTCGFADLMGYIPVVGAPLGGVAAALAHGVRAIEDGINYATGNLPGCSFSIFLLALLSCLTTPASAVHYRNISGIYHLTNDCPNSSIIYEADNIIMHTPGCVPCVKTGNKSQCWVPVAPTLAVANASVPIRGFRSHVDLLVGSAAACSALYIGDLCGGVFLVGQLFTFRPRQHTTVQECNCSIYTGHITGHRMAWDMMMNWSPTVTFITSSLLRVPQLLLEIALEGHWGVIGALLYYSMVANWAKVFAVLLLFAGVDATTHIGSSASATTNRLTSFFSPGSKQNVQLIKTNGSWHINRTALNCNDSLHTGFIAGLLYAHRFNSSGCPERLSSCRPLHAFEQGWGPLTYANISGPSNDKPYCWHYPPRPCDIVPARSVCGPVYCFTPSPVVVGTTDRKGLPTYTWGANESDVFLLRSTRPPRGSWFGCTWMNSTGFVKTCGAPPCNTRPVGSGNDTLVCPTDCFRKHPEATYARCGSGPWLTPRCLVNYPYRLWHYPCTVNYTIHKVRMFVGGIEHRFEAACNWTRGERCELDDRDRVEMSPLLFSTTQLSILPCSFTTMPALSTGLIHLHQNIVDVQYLYGVSSAVVSWAVKWEYIVLAFLVLAVARVCACLWLMFLVGQAEAALENLIVLNATSAAGSQGWVWGVVFICAAWYIRGRAAPITTYAILQLWPLLLLVLALPRRAYAYNGEEAASLGMLAIVIITIFTLTPAYKTLLISTLWWIQYYIARAEAMLYVWVPSLQVRGGRDAVILLTCLLHPQLGFEVTKAILALLGPLYILQYSLLKTPYFVRAHILLRVCMFLRGVAGGKYVQAALLRLGAWTGTYIYDHLTPLSDWACDGLRDLAVAVEPVVFSPMEKKVITWGADTVACGDIISGLPVSARRGNLIFLGPADDIRDGGWRLLAPITAYAQQTRGLVGTIVTSLTGRDKNEVEGEIQVVSTATQSFLATTVNGVLWTVYHGAGSKTLAGPKGPICQMYTNVDQDLVGWPAPPGARSLTPCTCGSSDLYLVTRNADVIPARRRGDTRAALLSPRPISTLKGSSGGPMLCPSGHVAGIFRAAVCTRGVAKSLDFVPVENMQSTARSPSFSDNTTPPAVPQTYQVGYLHAPTGSGKSTKVPAAYAAQGYKVLVLNPSVAATLGFGSYMSTAHGIDPNIRTGVRTITTGGAITYSTYGKFLADGGCSGGAYDIIICDECHSTDPTTVLGIGTVLDQAETAGVRLTVLATATPPGSVTVPHPNITEVALSSTGEVPFYGKAIPLEYIKGGRHLIFCHSKKKCDELAKQLTSLGLNAVAFYRGVDVSVIPTSGDVVVCATDALMTGYTGDFDSVIDCNVSVTQVVDFSLDPTFTIETTTMPQDAVSRSQRRGRTGRGKHGVYRYVSQGERPSGIFDTVVLCEAYDTGCAWYELTPSETTVRLRAYLNTPGLPVCQDHLEFWEGVFTGLTHIDAHLLSQTKQGGENFAYLVAYQATVCARAKAPPPSWDTMWKCLIRLKPMLTGPTPLLYRLGAVQNEITTTHPITKYIMTCMSADLEVITSTWVLVGGVLAALAAYCLSVGCVVVCGRISTTGKPVLIPDREVLYQQFDEMEECSRHIPYLVEGQHLAEQFKQKVLGLIQTTTRQAEEIEPVVHSAWPKLEQFWQKHLWNFVSGIQYLAGLSTLPGNPAVASLMSFSASLTSPLSTSTTLLLNILGGWVASQLANPTASTAFVVSGLAGATVGSIGLGRVLVDIIAGYGAGVSGALVAFKIMSGETPSAEDMVNLLPALLSPGALVVGVVCAAILRRHAGPAEGATQWMNRLIAFASRGNHVSPTHYVPETDTSRQVMAILSSLTVTSLLRKLHEWINSDWSTPCSGSWLRDIWDWVCTVLSDFKVWLKSKLVPALPGVPFLSCQRGFRGVWRGDGICRTTCPCGADIVGHVKNGSMRISGSRWCSNIWHGTFPINATTTGPSVPIPEPNYKRALWRVSAEEYVEVARVGDSHFVVGATNQDLKCPCQVPAPEFFTEVDGVRLHRFAPACKPLLRDEISFLVGLNSYAIGSQLPCEPEPDVTVVTSMLVDPSHLTAEAAARRLARGSPPSCASSLASQLSAPSLKATCTTHCAHPDADLIEANLLWRQEVGGNITRVESENKVIVLDSFDPLVPEYDDREPSVPAECHRPNRPKFPPALPIWARPDYNPPLLETWKKPDYAPPLVHGCALPSPVQPPVPPPRRKSVVHLDDSTVATALAELAEKSFPTQPASTPDSDSGHPTTSKSSDQADEGEDTPSEAGSYSSMPPLEGEPGDPDLSSGSWSTVSEEGDSVVCCSMSYSWTGALVTPCAAEEEKLPINPLSNSLIRHHNLVYSTTTRSAAMRQKKVTFDRLQILDQHYNNVVKEVKLRASGVTAKLLSVEEACSLTPPHSARSKFGYGAKDVRSHTSKAINHINSVWEDLLEDNQTPIPTTIMAKNEVFCADVSKGGRKPARLIVYPDLGVRVCEKRALYDVTRKLPTAIMGDAYGFQYSPKQRVDQLLKMWRSKKTPMGFSYDTRCFDSTVTEHDIKTERDVYLSCKLDPVARKAIESLTERLYIGGPMYNSRGQLCGTRRCRASGVLTTSLGNTMTCFIKAEAACRAAGLTNYDMLVCGDDLVVIAESAGVQEDASNLRAFTEAMTRYSAPPGDEPHPAYDLELITSCSSNVSVAHDHTGQRYYYLTRDPTTPLSRAAWETARHTPVNSWLGNIIMYAPAIWVRMVLMTHFFQILQAQEQLDKVLDFDMYGVTYSVSPLQLPAIIQRLHGMAAFSLHGYSPTELNRVGACLRKLGAPPLRAWRHRARAVRAKLIAQGGGAAICGKYLFNWAVKTKLKLTPIPDAARLDLSGWFISGFSGGDIYHSVSRARPRIFLLCLLLLSVGVGIFLLPAR.

S2 is modified (N-acetylserine; by host). Residues 2–23 form an interaction with STAT1 region; sequence STLPKPQRKTKRNTNRRPMDVK. Residues 2–58 are interaction with EIF2AK2/PKR; that stretch reads STLPKPQRKTKRNTNRRPMDVKFPGGGQIVGGVYLLPRRGPRLGVRATRKTSERSQP. The tract at residues 2–59 is interaction with DDX3X; sequence STLPKPQRKTKRNTNRRPMDVKFPGGGQIVGGVYLLPRRGPRLGVRATRKTSERSQPR. Residues 2–75 form a disordered region; the sequence is STLPKPQRKT…PKARQSQGRH (74 aa). Topologically, residues 2-168 are cytoplasmic; sequence STLPKPQRKT…EDGINYATGN (167 aa). Short sequence motifs (nuclear localization signal) lie at residues 5-13 and 38-43; these read PKPQRKTKR and PRRGPR. Basic residues predominate over residues 7–16; sequence PQRKTKRNTN. Residues 32–47 show a composition bias toward low complexity; it reads GGVYLLPRRGPRLGVR. S53 is subject to Phosphoserine; by host. Short sequence motifs (nuclear localization signal) lie at residues 58 to 64 and 66 to 71; these read PRGRRQP and PKARQS. Phosphoserine; by host is present on residues S99 and S116. An important for endoplasmic reticulum and mitochondrial localization region spans residues 112 to 152; that stretch reads PRRRSRNLGKVIDTLTCGFADLMGYIPVVGAPLGGVAAALA. The segment at 122 to 173 is interaction with APOA2; that stretch reads VIDTLTCGFADLMGYIPVVGAPLGGVAAALAHGVRAIEDGINYATGNLPGCS. The interval 164–167 is important for lipid droplets localization; the sequence is YATG. The helical transmembrane segment at 169-189 threads the bilayer; the sequence is LPGCSFSIFLLALLSCLTTPA. Residues 178-191 constitute a propeptide, ER anchor for the core protein, removed in mature form by host signal peptidase; sequence LLALLSCLTTPASA. The Lumenal segment spans residues 190 to 358; that stretch reads SAVHYRNISG…LEGHWGVIGA (169 aa). N196, N209, N234, and N250 each carry an N-linked (GlcNAc...) asparagine; by host glycan. The important for fusion stretch occupies residues 265 to 296; the sequence is LVGSAAACSALYIGDLCGGVFLVGQLFTFRPR. N305 carries an N-linked (GlcNAc...) asparagine; by host glycan. Residues 359–379 traverse the membrane as a helical segment; the sequence is LLYYSMVANWAKVFAVLLLFA. The Lumenal portion of the chain corresponds to 380–727; it reads GVDATTHIGS…WEYIVLAFLV (348 aa). The interval 385–411 is HVR1; that stretch reads THIGSSASATTNRLTSFFSPGSKQNVQ. N-linked (GlcNAc...) (high mannose) asparagine; by host glycosylation is found at N416, N422, and N429. 4 disulfides stabilise this stretch: C428-C552, C451-C458, C486-C494, and C503-C508. N-linked (GlcNAc...) asparagine; by host glycosylation is present at N447. The interval 474-478 is HVR2; it reads ANISG. N-linked (GlcNAc...) asparagine; by host glycosylation is present at N475. Positions 480–493 are CD81-binding 1; sequence SNDKPYCWHYPPRP. N-linked (GlcNAc...) asparagine; by host glycosylation is present at N532. A CD81-binding 2 region spans residues 544–551; sequence PPRGSWFG. N556 is a glycosylation site (N-linked (GlcNAc...) asparagine; by host). 4 disulfide bridges follow: C564/C569, C583/C587, C599/C622, and C609/C646. N-linked (GlcNAc...) (high mannose) asparagine; by host glycosylation is found at N625 and N647. Cysteines 654 and 679 form a disulfide. The interval 662–673 is PKR/eIF2-alpha phosphorylation homology domain (PePHD); the sequence is VEMSPLLFSTTQ. The chain crosses the membrane as a helical span at residues 728–748; it reads LAVARVCACLWLMFLVGQAEA. The Lumenal portion of the chain corresponds to 749 to 759; it reads ALENLIVLNAT. A helical membrane pass occupies residues 760-780; that stretch reads SAAGSQGWVWGVVFICAAWYI. Residues 781-784 lie on the Cytoplasmic side of the membrane; the sequence is RGRA. The chain crosses the membrane as a helical span at residues 785–805; the sequence is APITTYAILQLWPLLLLVLAL. Residues 806–815 lie on the Lumenal side of the membrane; sequence PRRAYAYNGE. The chain crosses the membrane as a helical span at residues 816–836; that stretch reads EAASLGMLAIVIITIFTLTPA. Over 837–883 the chain is Cytoplasmic; sequence YKTLLISTLWWIQYYIARAEAMLYVWVPSLQVRGGRDAVILLTCLLH. Residues 884-904 traverse the membrane as a helical segment; it reads PQLGFEVTKAILALLGPLYIL. At 905-930 the chain is on the lumenal side; the sequence is QYSLLKTPYFVRAHILLRVCMFLRGV. The Peptidase C18 domain maps to 905–1028; that stretch reads QYSLLKTPYF…DIRDGGWRLL (124 aa). Residues 906 to 1208 are protease NS2-3; sequence YSLLKTPYFV…PVENMQSTAR (303 aa). The S-palmitoyl cysteine; by host moiety is linked to residue C924. A helical transmembrane segment spans residues 931-951; that stretch reads AGGKYVQAALLRLGAWTGTYI. Residues 931 to 951 form an interaction with host SCPS1 region; the sequence is AGGKYVQAALLRLGAWTGTYI. Residues 952–1659 are Cytoplasmic-facing; sequence YDHLTPLSDW…CMSADLEVIT (708 aa). Residues H954, E974, and C995 each act as for protease NS2 activity; shared with dimeric partner in the active site. Positions 1029-1210 constitute a Peptidase S29 domain; it reads APITAYAQQT…ENMQSTARSP (182 aa). Residues H1085 and D1109 each act as charge relay system; for serine protease NS3 activity in the active site. Zn(2+) is bound by residues C1125 and C1127. S1167 acts as the Charge relay system; for serine protease NS3 activity in catalysis. 2 residues coordinate Zn(2+): C1173 and H1177. The region spanning 1219-1371 is the Helicase ATP-binding domain; the sequence is PAVPQTYQVG…PNITEVALSS (153 aa). An ATP-binding site is contributed by 1232–1239; that stretch reads APTGSGKS. Mg(2+)-binding residues include S1239 and E1319. The DECH box signature appears at 1318 to 1321; that stretch reads DECH. The RNA-binding stretch occupies residues 1488–1500; sequence QRRGRTGRGKHGV. A helical transmembrane segment spans residues 1660–1680; the sequence is STWVLVGGVLAALAAYCLSVG. The interval 1681-1692 is NS3-binding; it reads CVVVCGRISTTG. Residues 1681-1807 lie on the Cytoplasmic side of the membrane; that stretch reads CVVVCGRIST…SLTSPLSTST (127 aa). A helical transmembrane segment spans residues 1808-1828; sequence TLLLNILGGWVASQLANPTAS. At 1829-1830 the chain is on the lumenal side; that stretch reads TA. Residues 1831–1851 form a helical membrane-spanning segment; the sequence is FVVSGLAGATVGSIGLGRVLV. Position 1852 (D1852) is a topological domain, cytoplasmic. The helical transmembrane segment at 1853 to 1873 threads the bilayer; that stretch reads IIAGYGAGVSGALVAFKIMSG. The Lumenal segment spans residues 1874 to 1883; it reads ETPSAEDMVN. A helical transmembrane segment spans residues 1884-1904; the sequence is LLPALLSPGALVVGVVCAAIL. Over 1905-1974 the chain is Cytoplasmic; that stretch reads RRHAGPAEGA…WINSDWSTPC (70 aa). C1974 carries the S-palmitoyl cysteine; by host lipid modification. The stretch at 1975–2004 is an intramembrane region; that stretch reads SGSWLRDIWDWVCTVLSDFKVWLKSKLVPA. Topologically, residues 2005-2995 are cytoplasmic; the sequence is LPGVPFLSCQ…YHSVSRARPR (991 aa). Zn(2+) contacts are provided by C2013, C2031, C2033, and C2054. Positions 2122 to 2210 are FKBP8-binding; the sequence is EFFTEVDGVR…ASSLASQLSA (89 aa). The tract at residues 2122–2335 is transcriptional activation; sequence EFFTEVDGVR…PVPPPRRKSV (214 aa). The tract at residues 2137–2141 is interaction with non-structural protein 4A; the sequence is PACKP. The tract at residues 2191 to 2443 is interaction with host SKP2; that stretch reads RLARGSPPSC…ALVTPCAAEE (253 aa). Phosphoserine; by host occurs at positions 2196, 2199, 2203, 2206, 2209, and 2212. The segment at 2212–2251 is ISDR; it reads SLKATCTTHCAHPDADLIEANLLWRQEVGGNITRVESENK. The interval 2212 to 2277 is interaction with EIF2AK2/PKR; sequence SLKATCTTHC…REPSVPAECH (66 aa). The interval 2251–2309 is NS4B-binding; it reads KVIVLDSFDPLVPEYDDREPSVPAECHRPNRPKFPPALPIWARPDYNPPLLETWKKPDY. The V3 stretch occupies residues 2302-2379; the sequence is ETWKKPDYAP…PTTSKSSDQA (78 aa). Positions 2325–2328 match the SH3-binding motif; that stretch reads PPVP. Positions 2330–2338 match the Nuclear localization signal motif; that stretch reads PRRKSVVHL. Residue K2353 forms a Glycyl lysine isopeptide (Lys-Gly) (interchain with G-Cter in ubiquitin) linkage. Residues 2353-2414 form a disordered region; sequence KSFPTQPAST…PDLSSGSWST (62 aa). Polar residues predominate over residues 2355–2376; sequence FPTQPASTPDSDSGHPTTSKSS. S2454 carries the post-translational modification Phosphoserine; by host. In terms of domain architecture, RdRp catalytic spans 2639–2757; sequence PMGFSYDTRC…IAESAGVQED (119 aa). 3 residues coordinate Mg(2+): D2645, D2743, and D2744. The chain crosses the membrane as a helical span at residues 2996-3016; sequence IFLLCLLLLSVGVGIFLLPAR.

It belongs to the hepacivirus polyprotein family. Homooligomer. Interacts with E1 (via C-terminus). Interacts with the non-structural protein 5A. Interacts (via N-terminus) with host STAT1 (via SH2 domain); this interaction results in decreased STAT1 phosphorylation and ubiquitin-mediated proteasome-dependent STAT1 degradation, leading to decreased IFN-stimulated gene transcription. Interacts with host STAT3; this interaction constitutively activates STAT3. Interacts with host LTBR receptor. Interacts with host TNFRSF1A receptor and possibly induces apoptosis. Interacts with host HNRPK. Interacts with host YWHAE. Interacts with host UBE3A/E6AP. Interacts with host DDX3X. Interacts with host APOA2. Interacts with host RXRA protein. Interacts with host SP110 isoform 3/Sp110b; this interaction sequesters the transcriptional corepressor SP110 away from the nucleus. Interacts with host CREB3 nuclear transcription protein; this interaction triggers cell transformation. Interacts with host ACY3. Interacts with host C1QR1. Interacts with host RBM24; this interaction, which enhances the interaction of the mature core protein with 5'-UTR, may inhibit viral translation and favor replication. Interacts with host EIF2AK2/PKR; this interaction induces the autophosphorylation of EIF2AK2. Part of the viral assembly initiation complex composed of NS2, E1, E2, NS3, NS4A, NS5A and the mature core protein. As to quaternary structure, forms a heterodimer with envelope glycoprotein E2. Interacts with mature core protein. Interacts with protease NS2. The heterodimer E1/E2 interacts with host CLDN1; this interaction plays a role in viral entry into host cell. Interacts with host SPSB2 (via C-terminus). Part of the viral assembly initiation complex composed of NS2, E1, E2, NS3, NS4A, NS5A and the mature core protein. Interacts with host NEURL3; this interaction prevents E1 binding to glycoprotein E2. In terms of assembly, forms a heterodimer with envelope glycoprotein E1. Interacts with host CD81 and SCARB1 receptors; these interactions play a role in viral entry into host cell. Interacts with host EIF2AK2/PKR; this interaction inhibits EIF2AK2 and probably allows the virus to evade the innate immune response. Interacts with host CD209/DC-SIGN and CLEC4M/DC-SIGNR. Interact with host SPCS1; this interaction is essential for viral particle assembly. Interacts with protease NS2. The heterodimer E1/E2 interacts with host CLDN1; this interaction plays a role in viral entry into host cell. Part of the viral assembly initiation complex composed of NS2, E1, E2, NS3, NS4A, NS5A and the mature core protein. Interacts with host SLC3A2/4F2hc; the interaction may facilitate viral entry into host cell. Interacts with human PLSCR1. Homohexamer. Homoheptamer. Interacts with protease NS2. As to quaternary structure, homodimer. Interacts with host SPCS1; this interaction is essential for viral particle assembly. Interacts with envelope glycoprotein E1. Interacts with envelope glycoprotein E2. Interacts with viroporin p7. Interacts with serine protease/helicase NS3. Part of the replication complex composed of NS2, NS3, NS4A, NS4B, NS5A and the RNA-directed RNA polymerase embedded in an ER-derived membranous web. Part of the viral assembly initiation complex composed of NS2, E1, E2, NS3, NS4A, NS5A and the mature core protein. In terms of assembly, interacts with protease NS2. Interacts with non-structural protein 4A; this interaction stabilizes the folding of NS3 serine protease. NS3-NS4A interaction is essential for NS3 activation and allows membrane anchorage of the latter. NS3/NS4A complex also prevents phosphorylation of host IRF3, thus preventing the establishment of dsRNA induced antiviral state. Interacts with host MAVS; this interaction leads to the cleavage and inhibition of host MAVS. Interacts with host TICAM1; this interaction leads to the cleavage and inhibition of host TICAM1. Interacts with host TANK-binding kinase/TBK1; this interaction results in the inhibition of the association between TBK1 and IRF3, which leads to the inhibition of IRF3 activation. Interacts with host RBM24. Part of the replication complex composed of NS2, NS3, NS4A, NS4B, NS5A and the RNA-directed RNA polymerase embedded in an ER-derived membranous web. Part of the viral assembly initiation complex composed of NS2, E1, E2, NS3, NS4A, NS5A and the mature core protein. Interacts with NS3 serine protease; this interaction stabilizes the folding of NS3 serine protease. NS3-NS4A interaction is essential for NS3 activation and allows membrane anchorage of the latter. Interacts with non-structural protein 5A (via N-terminus). Part of the replication complex composed of NS2, NS3, NS4A, NS4B, NS5A and the RNA-directed RNA polymerase embedded in an ER-derived membranous web. Part of the viral assembly initiation complex composed of NS2, E1, E2, NS3, NS4A, NS5A and the mature core protein. As to quaternary structure, homomultimer. Interacts with non-structural protein NS5A. Interacts with host PLA2G4C; this interaction likely initiates the recruitment of replication complexes to lipid droplets. Interacts with host STING; this interaction disrupts the interaction between STING and TBK1 thereby suppressing the interferon signaling. Part of the replication complex composed of NS2, NS3, NS4A, NS4B, NS5A and the RNA-directed RNA polymerase embedded in an ER-derived membranous web. In terms of assembly, monomer. Homodimer; dimerization is required for RNA-binding. Interacts with the mature core protein. Interacts (via N-terminus) with non-structural protein 4A. Interacts with non-structural protein 4B. Interacts (via region D2) with RNA-directed RNA polymerase. Part of the viral assembly initiation complex composed of NS2, E1, E2, NS3, NS4A, NS5A and the mature core protein. Part of the replication complex composed of NS2, NS3, NS4A, NS4B, NS5A and the RNA-directed RNA polymerase embedded in an ER-derived membranous web. Interacts with host GRB2. Interacts with host BIN1. Interacts with host PIK3R1. Interacts with host SRCAP. Interacts with host FKBP8. Interacts (via C-terminus) with host VAPB (via MSP domain). Interacts with host EIF2AK2/PKR; this interaction leads to disruption of EIF2AK2 dimerization by NS5A and probably allows the virus to evade the innate immune response. Interacts (via N-terminus) with host PACSIN2 (via N-terminus); this interaction attenuates protein kinase C alpha-mediated phosphorylation of PACSIN2 by disrupting the interaction between PACSIN2 and PRKCA. Interacts (via N-terminus) with host SRC kinase (via SH2 domain). Interacts with most Src-family kinases. Interacts with host IFI27 and SKP2; promotes the ubiquitin-mediated proteasomal degradation of NS5A. Interacts with host GPS2. Interacts with host TNFRSF21; this interaction allows the modulation by the virus of JNK, p38 MAPK, STAT3, and Akt signaling pathways in a DR6-dependent manner. Interacts (via N-terminus) with host CIDEB (via N-terminus); this interaction seems to regulate the association of HCV particles with APOE. Interacts with host CHKA/Choline Kinase-alpha; CHKA bridges host PI4KA and NS5A and potentiates NS5A-stimulated PI4KA activity, which then facilitates the targeting of the ternary complex to the ER for viral replication. Interacts with host SPSB2 (via C-terminus); this interaction targets NS5A for ubiquitination and degradation. Interacts with host RAB18; this interaction may promote the association of NS5A and other replicase components with lipid droplets. Interacts (via region D2) with host PPIA/CYPA; the interaction stimulates RNA-binding ability of NS5A and is dependent on the peptidyl-prolyl cis-trans isomerase activity of PPIA/CYPA. Interacts with host TRIM14; this interaction induces the degradation of NS5A. Homooligomer. Interacts with non-structural protein 5A. Interacts with host VAPB. Interacts with host PRK2/PKN2. Interacts with host HNRNPA1 and SEPT6; these interactions facilitate viral replication. Part of the replication complex composed of NS2, NS3, NS4A, NS4B, NS5A and the RNA-directed RNA polymerase. It depends on Zn(2+) as a cofactor. Mg(2+) serves as cofactor. Post-translationally, specific enzymatic cleavages in vivo yield mature proteins. The structural proteins, core, E1, E2 and p7 are produced by proteolytic processing by host signal peptidases. The core protein precursor is synthesized as a 23 kDa, which is retained in the ER membrane through the hydrophobic signal peptide. Cleavage by the signal peptidase releases the 21 kDa mature core protein. The cleavage of the core protein precursor occurs between aminoacids 176 and 188 but the exact cleavage site is not known. Some degraded forms of the core protein appear as well during the course of infection. The other proteins (p7, NS2, NS3, NS4A, NS4B, NS5A and NS5B) are cleaved by the viral proteases. Autoprocessing between NS2 and NS3 is mediated by the NS2 cysteine protease catalytic domain and regulated by the NS3 N-terminal domain. In terms of processing, phosphorylated by host PKC and PKA. Ubiquitinated; mediated by UBE3A and leading to core protein subsequent proteasomal degradation. Post-translationally, highly N-glycosylated. In terms of processing, palmitoylation is required for NS2/3 autoprocessing and E2 recruitment to membranes. Palmitoylated. This modification may play a role in its polymerization or in protein-protein interactions. Post-translationally, phosphorylated on serines in a basal form termed p56. p58 is a hyperphosphorylated form of p56. p56 and p58 coexist in the cell in roughly equivalent amounts. Hyperphosphorylation is dependent on the presence of NS4A. Host CSNK1A1/CKI-alpha or RPS6KB1 kinases may be responsible for NS5A phosphorylation. In terms of processing, tyrosine phosphorylation is essential for the interaction with host SRC. Ubiquitinated. Ubiquitination, most probably at Lys-2353, mediated by host IFI27 and SKP2 leads to proteasomal degradation, restricting viral infection. Ubiquitination by host TRIM22 leads to interruption of viral replication. Post-translationally, the N-terminus is phosphorylated by host PRK2/PKN2.

It localises to the host endoplasmic reticulum membrane. The protein resides in the host mitochondrion membrane. The protein localises to the virion. It is found in the host cytoplasm. Its subcellular location is the host nucleus. It localises to the host lipid droplet. The protein resides in the virion membrane. The protein localises to the host mitochondrion. It is found in the host cell membrane. Its subcellular location is the host perinuclear region. The enzyme catalyses Hydrolysis of four peptide bonds in the viral precursor polyprotein, commonly with Asp or Glu in the P6 position, Cys or Thr in P1 and Ser or Ala in P1'.. The catalysed reaction is a ribonucleoside 5'-triphosphate + H2O = a ribonucleoside 5'-diphosphate + phosphate + H(+). It catalyses the reaction ATP + H2O = ADP + phosphate + H(+). It carries out the reaction RNA(n) + a ribonucleoside 5'-triphosphate = RNA(n+1) + diphosphate. With respect to regulation, inhibited by the antiviral drug hexamethylene amiloride. Inhibition by amantadine appears to be genotype-dependent. Also inhibited by long-alkyl-chain iminosugar derivatives. Activity is up-regulated by PRK2/PKN2-mediated phosphorylation. In terms of biological role, packages viral RNA to form a viral nucleocapsid, and promotes virion budding. Participates in the viral particle production as a result of its interaction with the non-structural protein 5A. Binds RNA and may function as a RNA chaperone to induce the RNA structural rearrangements taking place during virus replication. Modulates viral translation initiation by interacting with viral IRES and 40S ribosomal subunit. Affects various cell signaling pathways, host immunity and lipid metabolism. Prevents the establishment of cellular antiviral state by blocking the interferon-alpha/beta (IFN-alpha/beta) and IFN-gamma signaling pathways and by blocking the formation of phosphorylated STAT1 and promoting ubiquitin-mediated proteasome-dependent degradation of STAT1. Activates STAT3 leading to cellular transformation. Regulates the activity of cellular genes, including c-myc and c-fos. May repress the promoter of p53, and sequester CREB3 and SP110 isoform 3/Sp110b in the cytoplasm. Represses cell cycle negative regulating factor CDKN1A, thereby interrupting an important check point of normal cell cycle regulation. Targets transcription factors involved in the regulation of inflammatory responses and in the immune response: suppresses TNF-induced NF-kappa-B activation, and activates AP-1. Binds to dendritic cells (DCs) via C1QR1, resulting in down-regulation of T-lymphocytes proliferation. Alters lipid metabolism by interacting with hepatocellular proteins involved in lipid accumulation and storage. Induces up-regulation of FAS promoter activity, and thereby contributes to the increased triglyceride accumulation in hepatocytes (steatosis). Its function is as follows. Forms a heterodimer with envelope glycoprotein E2, which mediates virus attachment to the host cell, virion internalization through clathrin-dependent endocytosis and fusion with host membrane. Fusion with the host cell is most likely mediated by both E1 and E2, through conformational rearrangements of the heterodimer required for fusion rather than a classical class II fusion mechanism. E1/E2 heterodimer binds host apolipoproteins such as APOB and ApoE thereby forming a lipo-viro-particle (LVP). APOE associated to the LVP allows the initial virus attachment to cell surface receptors such as the heparan sulfate proteoglycans (HSPGs), syndecan-1 (SDC1), syndecan-1 (SDC2), the low-density lipoprotein receptor (LDLR) and scavenger receptor class B type I (SCARB1). The cholesterol transfer activity of SCARB1 allows E2 exposure and binding of E2 to SCARB1 and the tetraspanin CD81. E1/E2 heterodimer binding on CD81 activates the epithelial growth factor receptor (EGFR) signaling pathway. Diffusion of the complex E1-E2-EGFR-SCARB1-CD81 to the cell lateral membrane allows further interaction with Claudin 1 (CLDN1) and occludin (OCLN) to finally trigger HCV entry. Forms a heterodimer with envelope glycoprotein E1, which mediates virus attachment to the host cell, virion internalization through clathrin-dependent endocytosis and fusion with host membrane. Fusion with the host cell is most likely mediated by both E1 and E2, through conformational rearrangements of the heterodimer required for fusion rather than a classical class II fusion mechanism. The interaction between envelope glycoprotein E2 and host apolipoprotein E/APOE allows the proper assembly, maturation and infectivity of the viral particles. This interaction is probably promoted via the up-regulation of cellular autophagy by the virus. E1/E2 heterodimer binds host apolipoproteins such as APOB and APOE thereby forming a lipo-viro-particle (LVP). APOE associated to the LVP allows the initial virus attachment to cell surface receptors such as the heparan sulfate proteoglycans (HSPGs), syndecan-1 (SDC1), syndecan-1 (SDC2), the low-density lipoprotein receptor (LDLR) and scavenger receptor class B type I (SCARB1). The cholesterol transfer activity of SCARB1 allows E2 exposure and binding of E2 to SCARB1 and the tetraspanin CD81. E1/E2 heterodimer binding on CD81 activates the epithelial growth factor receptor (EGFR) signaling pathway. Diffusion of the complex E1-E2-EGFR-SCARB1-CD81 to the cell lateral membrane allows further interaction with Claudin 1 (CLDN1) and occludin (OCLN) to finally trigger HCV entry. Inhibits host EIF2AK2/PKR activation, preventing the establishment of an antiviral state. Viral ligand for CD209/DC-SIGN and CLEC4M/DC-SIGNR, which are respectively found on dendritic cells (DCs), and on liver sinusoidal endothelial cells and macrophage-like cells of lymph node sinuses. These interactions allow the capture of circulating HCV particles by these cells and subsequent facilitated transmission to permissive cells such as hepatocytes and lymphocyte subpopulations. The interaction between E2 and host amino acid transporter complex formed by SLC3A2 and SLC7A5/LAT1 may facilitate viral entry into host cell. Functionally, ion channel protein that acts as a viroporin and plays an essential role in the assembly, envelopment and secretion of viral particles. Regulates the host cell secretory pathway, which induces the intracellular retention of viral glycoproteins and favors assembly of viral particles. Creates a pore in acidic organelles and releases Ca(2+) and H(+) in the cytoplasm of infected cells, leading to a productive viral infection. High levels of cytoplasmic Ca(2+) may trigger membrane trafficking and transport of viral ER-associated proteins to viroplasms, sites of viral genome replication. This ionic imbalance induces the assembly of the inflammasome complex, which triggers the maturation of pro-IL-1beta into IL-1beta through the action of caspase-1. Targets also host mitochondria and induces mitochondrial depolarization. In addition of its role as a viroporin, acts as a lipid raft adhesion factor. In terms of biological role, cysteine protease required for the proteolytic auto-cleavage between the non-structural proteins NS2 and NS3. The N-terminus of NS3 is required for the function of NS2 protease (active region NS2-3). Promotes the initiation of viral particle assembly by mediating the interaction between structural and non-structural proteins. Its function is as follows. Displays three enzymatic activities: serine protease with a chymotrypsin-like fold, NTPase and RNA helicase. NS3 serine protease, in association with NS4A, is responsible for the cleavages of NS3-NS4A, NS4A-NS4B, NS4B-NS5A and NS5A-NS5B. The NS3/NS4A complex prevents phosphorylation of host IRF3, thus preventing the establishment of dsRNA induced antiviral state. The NS3/NS4A complex induces host amino acid transporter component SLC3A2, thus contributing to HCV propagation. NS3 RNA helicase binds to RNA and unwinds both dsDNA and dsRNA in the 3' to 5' direction, and likely resolves RNA complicated stable secondary structures in the template strand. Binds a single ATP and catalyzes the unzipping of a single base pair of dsRNA. Inhibits host antiviral proteins TBK1 and IRF3 thereby preventing the establishment of an antiviral state. Cleaves host MAVS/CARDIF thereby preventing the establishment of an antiviral state. Cleaves host TICAM1/TRIF, thereby disrupting TLR3 signaling and preventing the establishment of an antiviral state. Peptide cofactor which forms a non-covalent complex with the N-terminal of NS3 serine protease. The NS3/NS4A complex prevents phosphorylation of host IRF3, thus preventing the establishment of dsRNA induced antiviral state. The NS3/NS4A complex induces host amino acid transporter component SLC3A2, thus contributing to HCV propagation. Functionally, induces a specific membrane alteration that serves as a scaffold for the virus replication complex. This membrane alteration gives rise to the so-called ER-derived membranous web that contains the replication complex. NS4B self-interaction contributes to its function in membranous web formation. Promotes host TRIF protein degradation in a CASP8-dependent manner thereby inhibiting host TLR3-mediated interferon signaling. Disrupts the interaction between STING and TBK1 contributing to the inhibition of interferon signaling. In terms of biological role, phosphorylated protein that is indispensable for viral replication and assembly. Both hypo- and hyperphosphorylated states are required for the viral life cycle. The hyperphosphorylated form of NS5A is an inhibitor of viral replication. Involved in RNA-binding and especially in binding to the viral genome. Zinc is essential for RNA-binding. Participates in the viral particle production as a result of its interaction with the mature viral core protein. Its interaction with host VAPB may target the viral replication complex to vesicles. Down-regulates viral IRES translation initiation. Mediates interferon resistance, presumably by interacting with and inhibiting host EIF2AK2/PKR. Prevents BIN1-induced apoptosis. Acts as a transcriptional activator of some host genes important for viral replication when localized in the nucleus. Via the interaction with host PACSIN2, modulates lipid droplet formation in order to promote virion assembly. Modulates TNFRSF21/DR6 signaling pathway for viral propagation. Its function is as follows. RNA-dependent RNA polymerase that performs primer-template recognition and RNA synthesis during viral replication. Initiates RNA transcription/replication at a flavin adenine dinucleotide (FAD), resulting in a 5'- FAD cap on viral RNAs. In this way, recognition of viral 5' RNA by host pattern recognition receptors can be bypassed, thereby evading activation of antiviral pathways. The sequence is that of Genome polyprotein from Hepatitis C virus genotype 6k (isolate VN405) (HCV).